The chain runs to 110 residues: uncharacterized protein (110 aa).

It is found in the mitochondrion. This is an uncharacterized protein from Arabidopsis thaliana (Mouse-ear cress).